Reading from the N-terminus, the 379-residue chain is Orotidine 5'-phosphate decarboxylase (379 aa).

Residues Asp42, 64 to 66, and 99 to 108 each bind substrate; these read KTH and DRKFGDIGHT. The active-site Proton donor is the Lys101. The segment at 165 to 198 is disordered; that stretch reads PTMDQFDDAEDAKDDEPATVNDNGSNMMEKPIYA. The segment covering 169–178 has biased composition (acidic residues); sequence QFDDAEDAKD. Substrate contacts are provided by Tyr331 and Arg350.

It belongs to the OMP decarboxylase family.

The enzyme catalyses orotidine 5'-phosphate + H(+) = UMP + CO2. It participates in pyrimidine metabolism; UMP biosynthesis via de novo pathway; UMP from orotate: step 2/2. The chain is Orotidine 5'-phosphate decarboxylase (pyr4) from Hypocrea atroviridis (Trichoderma atroviride).